A 760-amino-acid polypeptide reads, in one-letter code: MSPKKVQIKVEEKEDETEESSSEEEEEVEDKLPRRESLRPKRKRTRDVINEDDPEPEPEDEETRKAREKERRRRLKRGAEEEEIDEEELERLKAELDEKRQIIATVKCKPWKMEKKIEVLKEAKKFVSENEGALGKGKGKRWFAFKMMMAKKWAKFLRDFENFKAACVPWENKIKAIESQFGSSVASYFLFLRWMYGVNMVLFILTFSLIMLPEYLWGLPYGSLPRKTVPRAEEASAANFGVLYDFNGLAQYSVLFYGYYDNKRTIGWMNFRLPLSYFLVGIMCIGYSFLVVLKAMTKNIGDDGGGDDNTFNFSWKVFTSWDYLIGNPETADNKFNSITMNFKEAITEEKAAQVEENVHLIRFLRFLANFFVFLTLGGSGYLIFWAVKRSQEFAQQDPDTLGWWEKNEMNMVMSLLGMFCPTLFDLFAELEDYHPLIALKWLLGRIFALLLGNLYVFILALMDEINNKIEEEKLVKANITLWEANMIKAYNASFSENSTGPPFFVHPADVPRGPCWETMVGQEFVRLTVSDVLTTYVTILIGDFLRACFVRFCNYCWCWDLEYGYPSYTEFDISGNVLALIFNQGMIWMGSFFAPSLPGINILRLHTSMYFQCWAVMCCNVPEARVFKASRSNNFYLGMLLLILFLSTMPVLYMIVSLPPSFDCGPFSGKNRMFEVIGETLEHDFPSWMAKILRQLSNPGLVIAVILVMVLAIYYLNATAKGQKAANLDLKKKMKMQALENKMRNKKMAAARAAAAAGRQ.

The interval 1 to 80 (MSPKKVQIKV…RRRRLKRGAE (80 aa)) is disordered. The Cytoplasmic segment spans residues 1–182 (MSPKKVQIKV…KIKAIESQFG (182 aa)). The segment covering 13–29 (KEDETEESSSEEEEEVE) has biased composition (acidic residues). Residues 30–39 (DKLPRRESLR) show a composition bias toward basic and acidic residues. A Phosphoserine modification is found at Ser37. Residue Thr45 is modified to Phosphothreonine. Positions 50-61 (NEDDPEPEPEDE) are enriched in acidic residues. Ser128 bears the Phosphoserine mark. A helical membrane pass occupies residues 183-220 (SSVASYFLFLRWMYGVNMVLFILTFSLIMLPEYLWGLP). Residues 221–271 (YGSLPRKTVPRAEEASAANFGVLYDFNGLAQYSVLFYGYYDNKRTIGWMNF) lie on the Extracellular side of the membrane. A helical transmembrane segment spans residues 272–303 (RLPLSYFLVGIMCIGYSFLVVLKAMTKNIGDD). Over 304–359 (GGGDDNTFNFSWKVFTSWDYLIGNPETADNKFNSITMNFKEAITEEKAAQVEENVH) the chain is Cytoplasmic. At Ser314 the chain carries Phosphoserine. A helical transmembrane segment spans residues 360–390 (LIRFLRFLANFFVFLTLGGSGYLIFWAVKRS). Residues 391–402 (QEFAQQDPDTLG) are Extracellular-facing. Phosphothreonine is present on Thr400. A helical transmembrane segment spans residues 403–430 (WWEKNEMNMVMSLLGMFCPTLFDLFAEL). Residues 431 to 434 (EDYH) lie on the Cytoplasmic side of the membrane. Residues 435-469 (PLIALKWLLGRIFALLLGNLYVFILALMDEINNKI) traverse the membrane as a helical segment. The Extracellular portion of the chain corresponds to 470–515 (EEEKLVKANITLWEANMIKAYNASFSENSTGPPFFVHPADVPRGPC). Residues 516 to 553 (WETMVGQEFVRLTVSDVLTTYVTILIGDFLRACFVRFC) traverse the membrane as a helical segment. Over 554-572 (NYCWCWDLEYGYPSYTEFD) the chain is Cytoplasmic. A helical transmembrane segment spans residues 573–593 (ISGNVLALIFNQGMIWMGSFF). The Extracellular portion of the chain corresponds to 594–596 (APS). Residues 597–619 (LPGINILRLHTSMYFQCWAVMCC) traverse the membrane as a helical segment. At 620–633 (NVPEARVFKASRSN) the chain is on the cytoplasmic side. Residues 634–657 (NFYLGMLLLILFLSTMPVLYMIVS) form a helical membrane-spanning segment. Residues 658-700 (LPPSFDCGPFSGKNRMFEVIGETLEHDFPSWMAKILRQLSNPG) lie on the Extracellular side of the membrane. The helical transmembrane segment at 701 to 734 (LVIAVILVMVLAIYYLNATAKGQKAANLDLKKKM) threads the bilayer. At 735–760 (KMQALENKMRNKKMAAARAAAAAGRQ) the chain is on the cytoplasmic side.

It belongs to the TMC family. Forms the MET channel complosed of TMC dimer (TMC1 or TMC2), TMIE, TOMT, CIB (CIB2 or CIB3), LHFPL5 and PDH15. The interaction of TMC1 and TMC2 with TOMT is required for the transportation of TMC1/2 into the stereocilia of hair cells. Interacts (via N-terminus) with both isoforms CD1 and CD3 of PCDH15. Can form a heterodimer with TMC2, TMC5 or TMC7. In terms of tissue distribution, detected in fetal cochlea, and at low levels in placenta and testis.

The protein resides in the cell membrane. It catalyses the reaction Ca(2+)(in) = Ca(2+)(out). Its function is as follows. Pore-forming subunit of the mechanotransducer (MET) non-selective cation channel complex located at the tips of stereocilia of cochlear hair cells and that mediates sensory transduction in the auditory system. The MET complex is composed of two dimeric pore-forming ion-conducting transmembrane TMC (TMC1 or TMC2) subunits, and aided by several auxiliary proteins including LHFPL5, TMIE, CIB2/3 and TOMT, and the tip-link PCDH15. MET channel is activated by tension in the tip-link extending from the side wall of one stereocilium to the tip of the adjacent shorter stereocilium, where the channel is located. TMC1 MET channel is highly permeable to calcium and likely transports monovalent cations. Also involved in vestibular hair cells transduction current. The chain is Transmembrane channel-like protein 1 from Homo sapiens (Human).